The sequence spans 151 residues: Large-conductance mechanosensitive channel (151 aa).

The next 3 helical transmembrane spans lie at 14-34 (VVDM…VNTL), 38-58 (VLMP…LYLI), and 86-106 (GLFL…FLLV).

The protein belongs to the MscL family. In terms of assembly, homopentamer.

The protein resides in the cell inner membrane. In terms of biological role, channel that opens in response to stretch forces in the membrane lipid bilayer. May participate in the regulation of osmotic pressure changes within the cell. The sequence is that of Large-conductance mechanosensitive channel from Pelodictyon phaeoclathratiforme (strain DSM 5477 / BU-1).